The chain runs to 466 residues: Asparagine--tRNA ligase (466 aa).

It belongs to the class-II aminoacyl-tRNA synthetase family. Homodimer.

Its subcellular location is the cytoplasm. It catalyses the reaction tRNA(Asn) + L-asparagine + ATP = L-asparaginyl-tRNA(Asn) + AMP + diphosphate + H(+). This Yersinia enterocolitica serotype O:8 / biotype 1B (strain NCTC 13174 / 8081) protein is Asparagine--tRNA ligase.